Consider the following 410-residue polypeptide: Peptidase T (410 aa).

A Zn(2+)-binding site is contributed by His79. The active site involves Asp81. Asp142 is a Zn(2+) binding site. Catalysis depends on Glu176, which acts as the Proton acceptor. Zn(2+) is bound by residues Glu177, Asp199, and His381.

This sequence belongs to the peptidase M20B family. Zn(2+) is required as a cofactor.

Its subcellular location is the cytoplasm. It carries out the reaction Release of the N-terminal residue from a tripeptide.. In terms of biological role, cleaves the N-terminal amino acid of tripeptides. This is Peptidase T from Bacillus pumilus (strain SAFR-032).